The sequence spans 21 residues: Protein YadW (21 aa).

The sequence is that of Protein YadW from Escherichia coli (strain K12).